The following is a 358-amino-acid chain: MATDDDRFPWDQDSILSRDLLSASSMQLCYEKLNRSCVRSPYSPGPRLILYAVFGFGAVLAVCGNLLVMTSILHFRQLHSPANFLVASLACADFLVGLTVMPFSMVRSVEGCWYFGDIYCKFHSSFDGSFCYSSIFHLCFISADRYIAVSDPLIYPTRFTASVSGKCITFSWLLSIIYSFSLFYTGVNEAGLEDLVSALTCVGGCQIAVNQSWVFINFLLFLVPALVMMTVYSKIFLIAKQQAQNIEKMGKQTARASESYKDRVAKRERKAAKTLGIAVAAFLLSWLPYFIDSIIDAFLGFVTPTYVYEILVWIGYYNSAMNPLIYAFFYPWFRKAIKLIVTGKILRENSSATNLFPE.

Residues 1 to 47 lie on the Extracellular side of the membrane; that stretch reads MATDDDRFPWDQDSILSRDLLSASSMQLCYEKLNRSCVRSPYSPGPR. A glycan (N-linked (GlcNAc...) asparagine) is linked at N34. Disulfide bonds link C37–C201 and C120–C205. The chain crosses the membrane as a helical span at residues 48–68; the sequence is LILYAVFGFGAVLAVCGNLLV. Residues 69-83 lie on the Cytoplasmic side of the membrane; that stretch reads MTSILHFRQLHSPAN. Residues 84 to 104 form a helical membrane-spanning segment; sequence FLVASLACADFLVGLTVMPFS. Residues 105-125 are Extracellular-facing; it reads MVRSVEGCWYFGDIYCKFHSS. The helical transmembrane segment at 126 to 147 threads the bilayer; it reads FDGSFCYSSIFHLCFISADRYI. Residues 148-166 lie on the Cytoplasmic side of the membrane; the sequence is AVSDPLIYPTRFTASVSGK. The chain crosses the membrane as a helical span at residues 167–187; the sequence is CITFSWLLSIIYSFSLFYTGV. The Extracellular portion of the chain corresponds to 188–211; it reads NEAGLEDLVSALTCVGGCQIAVNQ. N210 is a glycosylation site (N-linked (GlcNAc...) asparagine). Residues 212 to 232 form a helical membrane-spanning segment; that stretch reads SWVFINFLLFLVPALVMMTVY. The Cytoplasmic portion of the chain corresponds to 233-274; the sequence is SKIFLIAKQQAQNIEKMGKQTARASESYKDRVAKRERKAAKT. Residues 275-295 traverse the membrane as a helical segment; the sequence is LGIAVAAFLLSWLPYFIDSII. At 296-309 the chain is on the extracellular side; sequence DAFLGFVTPTYVYE. A helical membrane pass occupies residues 310–332; that stretch reads ILVWIGYYNSAMNPLIYAFFYPW. Over 333 to 358 the chain is Cytoplasmic; it reads FRKAIKLIVTGKILRENSSATNLFPE.

The protein belongs to the G-protein coupled receptor 1 family.

It is found in the cell membrane. Olfactory receptor specific for N,N-dimethylalkylamines trace amines, such as N,N-dimethylcyclohexylamine. Trace amine compounds are enriched in animal body fluids and act on trace amine-associated receptors (TAARs) to elicit both intraspecific and interspecific innate behaviors. Ligand-binding causes a conformation change that triggers signaling via G(s)-class of G alpha proteins (GNAL or GNAS). The sequence is that of Trace amine-associated receptor 7b from Rattus norvegicus (Rat).